A 472-amino-acid polypeptide reads, in one-letter code: Fumarate hydratase class II (472 aa).

Positions 1–20 (MSPHENPSVETRTESDTFGP) are disordered. Substrate-binding positions include 105–107 (SGT), 136–139 (HPND), 146–148 (SSN), and T194. The segment at 127-149 (GKRGGKSPVHPNDHCNRGQSSND) is disordered. The active-site Proton donor/acceptor is H195. Residue S325 is part of the active site. Substrate contacts are provided by residues S326 and 331–333 (KVN).

The protein belongs to the class-II fumarase/aspartase family. Fumarase subfamily. Homotetramer.

Its subcellular location is the cytoplasm. It catalyses the reaction (S)-malate = fumarate + H2O. The protein operates within carbohydrate metabolism; tricarboxylic acid cycle; (S)-malate from fumarate: step 1/1. Its function is as follows. Involved in the TCA cycle. Catalyzes the stereospecific interconversion of fumarate to L-malate. The polypeptide is Fumarate hydratase class II (Methylorubrum extorquens (strain ATCC 14718 / DSM 1338 / JCM 2805 / NCIMB 9133 / AM1) (Methylobacterium extorquens)).